The primary structure comprises 231 residues: 2,3-bisphosphoglycerate-dependent phosphoglycerate mutase (231 aa).

Substrate contacts are provided by residues 10–17 (RHGQSEWN), 23–24 (TG), Arg-62, 89–92 (ERHY), Lys-100, 116–117 (RR), and 185–186 (GN). The active-site Tele-phosphohistidine intermediate is His-11. Glu-89 (proton donor/acceptor) is an active-site residue.

Belongs to the phosphoglycerate mutase family. BPG-dependent PGAM subfamily. As to quaternary structure, homodimer.

It carries out the reaction (2R)-2-phosphoglycerate = (2R)-3-phosphoglycerate. The protein operates within carbohydrate degradation; glycolysis; pyruvate from D-glyceraldehyde 3-phosphate: step 3/5. In terms of biological role, catalyzes the interconversion of 2-phosphoglycerate and 3-phosphoglycerate. The polypeptide is 2,3-bisphosphoglycerate-dependent phosphoglycerate mutase (Buchnera aphidicola subsp. Acyrthosiphon pisum (strain 5A)).